Consider the following 232-residue polypeptide: Phosphoglycolate phosphatase (232 aa).

Catalysis depends on aspartate 8, which acts as the Nucleophile. 2 residues coordinate Mg(2+): aspartate 8 and aspartate 10. Lysine 155 is a substrate binding site. Residues aspartate 178 and aspartate 182 each coordinate Mg(2+).

It belongs to the archaeal SPP-like hydrolase family. Mg(2+) serves as cofactor.

The catalysed reaction is 2-phosphoglycolate + H2O = glycolate + phosphate. In terms of biological role, catalyzes the dephosphorylation of 2-phosphoglycolate. This chain is Phosphoglycolate phosphatase, found in Methanospirillum hungatei JF-1 (strain ATCC 27890 / DSM 864 / NBRC 100397 / JF-1).